The sequence spans 119 residues: Large ribosomal subunit protein uL18 (119 aa).

Belongs to the universal ribosomal protein uL18 family. Part of the 50S ribosomal subunit; part of the 5S rRNA/L5/L18/L25 subcomplex. Contacts the 5S and 23S rRNAs.

Functionally, this is one of the proteins that bind and probably mediate the attachment of the 5S RNA into the large ribosomal subunit, where it forms part of the central protuberance. In Anaeromyxobacter dehalogenans (strain 2CP-C), this protein is Large ribosomal subunit protein uL18.